A 37-amino-acid polypeptide reads, in one-letter code: Large ribosomal subunit protein bL36 (37 aa).

The protein belongs to the bacterial ribosomal protein bL36 family.

The polypeptide is Large ribosomal subunit protein bL36 (Alkaliphilus oremlandii (strain OhILAs) (Clostridium oremlandii (strain OhILAs))).